The following is a 390-amino-acid chain: MLSLESIKKAPRADGFASILAIGRANPDNIIEQSAYPDFYFRVTNSEHLVDLKKKFQRICEKTAIRKRHFVWNEEFLTANPCFSTFMDKSLNVRQEVAISEIPKLGAKAATKAIEDWGQPKSRITHLIFCTTSGMDLPGADYQLTQILGLNPNVERVMLYQQGCFAGGTTLRLAKCLAESRKGARVLVVCAETTTVLFRAPSEEHQDDLVTQALFADGASAVIVGADPDEAADERASFVIVSTSQVLLPDSAGAIGGHVSEGGLLATLHRDVPQIVSKNVGKCLEEAFTPFGISDWNSIFWVPHPGGRAILDQVEERVGLKPEKLSVSRHVLAEYGNMSSVCVHFALDEMRKRSANEGKATTGEGLEWGVLFGFGPGLTVETVVLRSVPL.

Residue cysteine 164 is part of the active site.

This sequence belongs to the thiolase-like superfamily. Chalcone/stilbene synthases family.

The enzyme catalyses 3-(3-hydroxyphenyl)-propanoyl-CoA + 3 malonyl-CoA + 3 H(+) = 3,3',5-trihydroxybibenzyl + 4 CO2 + 4 CoA. This is Bibenzyl synthase (BIBSY212) from Phalaenopsis sp. (Moth orchid).